We begin with the raw amino-acid sequence, 318 residues long: Acetyl-coenzyme A carboxylase carboxyl transferase subunit alpha (318 aa).

The CoA carboxyltransferase C-terminal domain maps to 39–292 (LSDKAERQLR…GAAIAETLPG (254 aa)).

It belongs to the AccA family. Acetyl-CoA carboxylase is a heterohexamer composed of biotin carboxyl carrier protein (AccB), biotin carboxylase (AccC) and two subunits each of ACCase subunit alpha (AccA) and ACCase subunit beta (AccD).

Its subcellular location is the cytoplasm. The catalysed reaction is N(6)-carboxybiotinyl-L-lysyl-[protein] + acetyl-CoA = N(6)-biotinyl-L-lysyl-[protein] + malonyl-CoA. The protein operates within lipid metabolism; malonyl-CoA biosynthesis; malonyl-CoA from acetyl-CoA: step 1/1. Functionally, component of the acetyl coenzyme A carboxylase (ACC) complex. First, biotin carboxylase catalyzes the carboxylation of biotin on its carrier protein (BCCP) and then the CO(2) group is transferred by the carboxyltransferase to acetyl-CoA to form malonyl-CoA. This Acidiphilium cryptum (strain JF-5) protein is Acetyl-coenzyme A carboxylase carboxyl transferase subunit alpha.